Here is a 156-residue protein sequence, read N- to C-terminus: Small ribosomal subunit protein uS7 (156 aa).

It belongs to the universal ribosomal protein uS7 family. As to quaternary structure, part of the 30S ribosomal subunit. Contacts proteins S9 and S11.

In terms of biological role, one of the primary rRNA binding proteins, it binds directly to 16S rRNA where it nucleates assembly of the head domain of the 30S subunit. Is located at the subunit interface close to the decoding center, probably blocks exit of the E-site tRNA. The protein is Small ribosomal subunit protein uS7 of Anoxybacillus flavithermus (strain DSM 21510 / WK1).